A 166-amino-acid chain; its full sequence is Phospholipase A2 inhibitor clone 05 (166 aa).

The signal sequence occupies residues 1 to 19 (MRLILLSSLLLLGIFLADG). The region spanning 46–161 (LKGAFLTVHR…CDDNLLVVCE (116 aa)) is the C-type lectin domain. 2 disulfides stabilise this stretch: Cys83–Cys160 and Cys138–Cys152. Asn122 carries an N-linked (GlcNAc...) asparagine glycan.

The protein belongs to the alpha-type phospholipase A2 inhibitor family. Homotrimer; non-covalently linked. As to expression, expressed by the liver.

The protein resides in the secreted. Functionally, this phospholipase A2 inhibitor binds directly phospholipase A2 in the presence or absence of calcium. The sequence is that of Phospholipase A2 inhibitor clone 05 from Bothrops moojeni (Lance-headed viper).